Here is a 541-residue protein sequence, read N- to C-terminus: Metal transporter Nramp6 (541 aa).

Low complexity predominate over residues 1-18 (MAPLPAAATATASSAATP). The tract at residues 1 to 44 (MAPLPAAATATASSAATPADDEAHSLLPSTPSNEEDDDDLEERA) is disordered. Helical transmembrane passes span 87–107 (LWLF…PGNL), 120–140 (TLLW…LLAA), 172–192 (VAMV…IKIL), 196–216 (FLPL…FLSL), 224–244 (LEAV…WMFT), 270–290 (AVGV…SALV), 316–336 (IALA…AKGF), 358–378 (FGGG…AAGQ), 404–424 (IRSL…ALFF), 436–456 (WLNV…ITLV), 474–494 (VTWT…LDFF), and 502–522 (LSGS…LYLI).

It belongs to the NRAMP (TC 2.A.55) family.

It is found in the membrane. In terms of biological role, probable metal transporter. In Oryza sativa subsp. japonica (Rice), this protein is Metal transporter Nramp6 (NRAMP6).